The following is a 386-amino-acid chain: Succinate--CoA ligase [ADP-forming] subunit beta (386 aa).

The region spanning 9–244 (KELLRKYGVV…FDEEDADEIE (236 aa)) is the ATP-grasp domain. Residues Lys-46, 53–55 (GRG), Glu-99, Ala-102, and Glu-107 contribute to the ATP site. Mg(2+) is bound by residues Asn-199 and Asp-213. Substrate contacts are provided by residues Asn-264 and 321-323 (GIM).

The protein belongs to the succinate/malate CoA ligase beta subunit family. As to quaternary structure, heterotetramer of two alpha and two beta subunits. The cofactor is Mg(2+).

It carries out the reaction succinate + ATP + CoA = succinyl-CoA + ADP + phosphate. It catalyses the reaction GTP + succinate + CoA = succinyl-CoA + GDP + phosphate. It participates in carbohydrate metabolism; tricarboxylic acid cycle; succinate from succinyl-CoA (ligase route): step 1/1. Its function is as follows. Succinyl-CoA synthetase functions in the citric acid cycle (TCA), coupling the hydrolysis of succinyl-CoA to the synthesis of either ATP or GTP and thus represents the only step of substrate-level phosphorylation in the TCA. The beta subunit provides nucleotide specificity of the enzyme and binds the substrate succinate, while the binding sites for coenzyme A and phosphate are found in the alpha subunit. The protein is Succinate--CoA ligase [ADP-forming] subunit beta of Aromatoleum aromaticum (strain DSM 19018 / LMG 30748 / EbN1) (Azoarcus sp. (strain EbN1)).